The primary structure comprises 311 residues: Lipoyl synthase (311 aa).

Positions 47, 52, 58, 73, 77, 80, and 287 each coordinate [4Fe-4S] cluster. The Radical SAM core domain maps to 59-276; it reads WTKKHATVMI…AQIARAKGFL (218 aa).

Belongs to the radical SAM superfamily. Lipoyl synthase family. It depends on [4Fe-4S] cluster as a cofactor.

It is found in the cytoplasm. It catalyses the reaction [[Fe-S] cluster scaffold protein carrying a second [4Fe-4S](2+) cluster] + N(6)-octanoyl-L-lysyl-[protein] + 2 oxidized [2Fe-2S]-[ferredoxin] + 2 S-adenosyl-L-methionine + 4 H(+) = [[Fe-S] cluster scaffold protein] + N(6)-[(R)-dihydrolipoyl]-L-lysyl-[protein] + 4 Fe(3+) + 2 hydrogen sulfide + 2 5'-deoxyadenosine + 2 L-methionine + 2 reduced [2Fe-2S]-[ferredoxin]. Its pathway is protein modification; protein lipoylation via endogenous pathway; protein N(6)-(lipoyl)lysine from octanoyl-[acyl-carrier-protein]: step 2/2. In terms of biological role, catalyzes the radical-mediated insertion of two sulfur atoms into the C-6 and C-8 positions of the octanoyl moiety bound to the lipoyl domains of lipoate-dependent enzymes, thereby converting the octanoylated domains into lipoylated derivatives. The chain is Lipoyl synthase from Sphingopyxis alaskensis (strain DSM 13593 / LMG 18877 / RB2256) (Sphingomonas alaskensis).